The sequence spans 349 residues: DCD domain-containing protein NRP (349 aa).

The interval 157-201 is disordered; that stretch reads NNNKNKGIDEDHQIQKGGKKNRKNQQNNNNQRNEDDKNNGLDKRF. The span at 188–201 shows a compositional bias: basic and acidic residues; that stretch reads RNEDDKNNGLDKRF. Positions 214–346 constitute a DCD domain; it reads ETIGGYIFVC…VLSLLDIFAD (133 aa).

Interacts with CRY2 in the cytoplasm. Interacts with Verticillium dahliae PevD1. Interacts with FYPP3. As to expression, highly expressed in sensecent leaves, cauline leaves and sepals. Expressed in the shoot apical meristem, leaf veins, central cylinder, root hair zone, root tips, rosette leaves, flowers and siliques.

The protein resides in the cytoplasm. Contributes to the initial phase of responses to abiotic and biotic stress signals. Binds FYPP3 and facilitates FYPP3 degradation to promote abscisic acid (ABA) response. The polypeptide is DCD domain-containing protein NRP (Arabidopsis thaliana (Mouse-ear cress)).